We begin with the raw amino-acid sequence, 346 residues long: Methylthioribose-1-phosphate isomerase (346 aa).

Substrate contacts are provided by residues 54 to 56, Arg-91, and Gln-192; that span reads RGA. The active-site Proton donor is the Asp-233. Position 243–244 (243–244) interacts with substrate; sequence NK.

Belongs to the eIF-2B alpha/beta/delta subunits family. MtnA subfamily.

It catalyses the reaction 5-(methylsulfanyl)-alpha-D-ribose 1-phosphate = 5-(methylsulfanyl)-D-ribulose 1-phosphate. The protein operates within amino-acid biosynthesis; L-methionine biosynthesis via salvage pathway; L-methionine from S-methyl-5-thio-alpha-D-ribose 1-phosphate: step 1/6. In terms of biological role, catalyzes the interconversion of methylthioribose-1-phosphate (MTR-1-P) into methylthioribulose-1-phosphate (MTRu-1-P). This Yersinia pseudotuberculosis serotype O:1b (strain IP 31758) protein is Methylthioribose-1-phosphate isomerase.